The chain runs to 435 residues: Nuclear hormone receptor family member nhr-14 (435 aa).

A DNA-binding region (nuclear receptor) is located at residues 17–92; it reads ADFCVVCGDK…DGMKPEAIQN (76 aa). NR C4-type zinc fingers lie at residues 20–40 and 56–80; these read CVVC…CNGC and CRFN…FQKC. The interval 91–126 is disordered; that stretch reads QNERDRIGSTKRRKRSGANSENNSDSEGTPSPKIEV. A compositionally biased stretch (polar residues) spans 107–119; sequence GANSENNSDSEGT. One can recognise an NR LBD domain in the interval 131 to 355; that stretch reads VSRKLIEMLL…KRDTISPKIE (225 aa).

The protein belongs to the nuclear hormone receptor family. In terms of tissue distribution, expressed in intestine and head neurons in young adults.

It localises to the nucleus. In terms of biological role, orphan nuclear receptor. Transcriptional repressor of intestinal metal transporter smf-3 and genes of the innate immune response. Inhibits nuclear localization of transcription factor pqm-1; in response to pathogen stress, may facilitate translocation of pqm-1, leading to transcriptional activation of genes involved in innate immunity and iron uptake. This Caenorhabditis elegans protein is Nuclear hormone receptor family member nhr-14 (nhr-14).